The sequence spans 400 residues: Octopine dehydrogenase (400 aa).

Residues 10–13 and 35–38 each bind NADH; these read GGNG and FADE. Residues Gln118 and Thr143 each coordinate pyruvate. Gln118 is a substrate binding site. Cys148 contributes to the NAD(+) binding site. Met206 serves as a coordination point for L-arginine. His212 is a binding site for pyruvate. His212 is an active-site residue. Residue Arg324 participates in NAD(+) binding.

It belongs to the lysopine/nopaline/octopine/opine/vitopine dehydrogenases family.

It catalyses the reaction D-octopine + NAD(+) + H2O = L-arginine + pyruvate + NADH + H(+). In terms of biological role, catalyzes the reverse reaction of octopine dehydrogenation. Acts on L-arginine in preference to other substrates. This chain is Octopine dehydrogenase, found in Mizuhopecten yessoensis (Japanese scallop).